Consider the following 168-residue polypeptide: RNA annealing protein YRA2 (168 aa).

Residues phenylalanine 40–glutamine 114 enclose the RRM domain. The disordered stretch occupies residues aspartate 113 to lysine 152.

This sequence belongs to the YRA1 family. Associates with mRNPs.

Its subcellular location is the nucleus. Its function is as follows. Involved in export of poly(A) mRNAs from the nucleus. Recruited to the coding sequences as well as poly-A sites of active genes. The polypeptide is RNA annealing protein YRA2 (YRA2) (Candida glabrata (strain ATCC 2001 / BCRC 20586 / JCM 3761 / NBRC 0622 / NRRL Y-65 / CBS 138) (Yeast)).